Consider the following 98-residue polypeptide: Large ribosomal subunit protein uL23 (98 aa).

The protein belongs to the universal ribosomal protein uL23 family. In terms of assembly, part of the 50S ribosomal subunit. Contacts protein L29, and trigger factor when it is bound to the ribosome.

Its function is as follows. One of the early assembly proteins it binds 23S rRNA. One of the proteins that surrounds the polypeptide exit tunnel on the outside of the ribosome. Forms the main docking site for trigger factor binding to the ribosome. The chain is Large ribosomal subunit protein uL23 from Hydrogenovibrio crunogenus (strain DSM 25203 / XCL-2) (Thiomicrospira crunogena).